We begin with the raw amino-acid sequence, 107 residues long: Thioredoxin-1 (107 aa).

Positions 2-106 constitute a Thioredoxin domain; sequence ASVRTMTDFH…LTNMMAKLVK (105 aa). Catalysis depends on nucleophile residues Cys-31 and Cys-34. An intrachain disulfide couples Cys-31 to Cys-34.

The protein belongs to the thioredoxin family.

It localises to the nucleus. Functionally, participates in various redox reactions through the reversible oxidation of its active center dithiol to a disulfide and catalyzes dithiol-disulfide exchange reactions. As a reducing substrate of peroxiredoxin 1, thioredoxin 2 is preferred over thioredoxin 1. Required for female meiosis and early embryonic development. The chain is Thioredoxin-1 (dhd) from Drosophila yakuba (Fruit fly).